Here is an 85-residue protein sequence, read N- to C-terminus: Small ribosomal subunit protein uS17 (85 aa).

This sequence belongs to the universal ribosomal protein uS17 family. Part of the 30S ribosomal subunit.

In terms of biological role, one of the primary rRNA binding proteins, it binds specifically to the 5'-end of 16S ribosomal RNA. The polypeptide is Small ribosomal subunit protein uS17 (Desulforudis audaxviator (strain MP104C)).